The chain runs to 293 residues: MMRIALFLLTNLAVMLVFGLVLSLTGIQSSSVQGLMIMAGLFGFGGAFVSLLMSKWMALRSVGGEVIERPRNETEYWLLETVRRQSQQVGIAMPQVAIYQAPDINAFATGARRDASLVAVSTGLLQNMSRDEAEAVIAHEISHVANGDMVTMTLIQGVVNTFVIFISRLIAQIAAGFLSGDRDGESNSPGNPMVYFAVSMVLELVFGILASIITMWFSRHREFHADAGSAKLVGREKMIAALQRLKTSYEPQEAGSMMAFCINGKSKTFSELFMSHPPLDKRIEALRSGQYLK.

Transmembrane regions (helical) follow at residues 4-24 (IALF…VLSL) and 34-54 (GLMI…LLMS). H139 provides a ligand contact to Zn(2+). Residue E140 is part of the active site. H143 contributes to the Zn(2+) binding site. 2 helical membrane-spanning segments follow: residues 158–178 (VVNT…AGFL) and 193–213 (MVYF…ASII). Residue E222 participates in Zn(2+) binding.

Belongs to the peptidase M48B family. Requires Zn(2+) as cofactor.

The protein resides in the cell inner membrane. The protein is Protease HtpX of Yersinia pseudotuberculosis serotype O:1b (strain IP 31758).